Consider the following 90-residue polypeptide: Small ribosomal subunit protein bS16 (90 aa).

Belongs to the bacterial ribosomal protein bS16 family.

The polypeptide is Small ribosomal subunit protein bS16 (Streptococcus pyogenes serotype M4 (strain MGAS10750)).